A 251-amino-acid polypeptide reads, in one-letter code: uncharacterized protein (251 aa).

NADP(+) is bound at residue V12 to V36. S136 is a binding site for substrate. Catalysis depends on Y149, which acts as the Proton acceptor.

The protein belongs to the short-chain dehydrogenases/reductases (SDR) family.

This is an uncharacterized protein from Mycobacterium tuberculosis (strain CDC 1551 / Oshkosh).